The following is a 445-amino-acid chain: Amino-acid acetyltransferase (445 aa).

In terms of domain architecture, N-acetyltransferase spans 299 to 438 (EQVRQACIDD…KSLYNYQRRS (140 aa)).

This sequence belongs to the acetyltransferase family. ArgA subfamily.

It localises to the cytoplasm. The enzyme catalyses L-glutamate + acetyl-CoA = N-acetyl-L-glutamate + CoA + H(+). Its pathway is amino-acid biosynthesis; L-arginine biosynthesis; N(2)-acetyl-L-ornithine from L-glutamate: step 1/4. The sequence is that of Amino-acid acetyltransferase (argA) from Vibrio vulnificus (strain CMCP6).